The primary structure comprises 347 residues: Bifunctional methylenetetrahydrofolate dehydrogenase/cyclohydrolase 2, mitochondrial (347 aa).

Substrate is bound by residues 98–102 and 145–147; these read YVRNK and VQL. Residues 214–216 and arginine 247 each bind NAD(+); that span reads GRS. Residue 323–327 participates in substrate binding; that stretch reads PGGVG.

This sequence belongs to the tetrahydrofolate dehydrogenase/cyclohydrolase family. The cofactor is Mg(2+).

It is found in the mitochondrion inner membrane. It carries out the reaction (6R)-5,10-methylene-5,6,7,8-tetrahydrofolate + NAD(+) = (6R)-5,10-methenyltetrahydrofolate + NADH. The catalysed reaction is (6R)-5,10-methenyltetrahydrofolate + H2O = (6R)-10-formyltetrahydrofolate + H(+). It catalyses the reaction (6R)-5,10-methylene-5,6,7,8-tetrahydrofolate + NADP(+) = (6R)-5,10-methenyltetrahydrofolate + NADPH. The protein operates within one-carbon metabolism; tetrahydrofolate interconversion. In terms of biological role, bifunctional mitochondrial folate-interconverting enzyme that has both NAD/NADP-dependent methylenetetrahydrofolate dehydrogenase and methenyltetrahydrofolate cyclohydrolase activities. This is Bifunctional methylenetetrahydrofolate dehydrogenase/cyclohydrolase 2, mitochondrial from Callithrix jacchus (White-tufted-ear marmoset).